We begin with the raw amino-acid sequence, 565 residues long: Adenine deaminase (565 aa).

Belongs to the metallo-dependent hydrolases superfamily. Adenine deaminase family. The cofactor is Mn(2+).

The enzyme catalyses adenine + H2O + H(+) = hypoxanthine + NH4(+). The sequence is that of Adenine deaminase from Cereibacter sphaeroides (strain ATCC 17023 / DSM 158 / JCM 6121 / CCUG 31486 / LMG 2827 / NBRC 12203 / NCIMB 8253 / ATH 2.4.1.) (Rhodobacter sphaeroides).